A 474-amino-acid chain; its full sequence is Shugoshin-1 (474 aa).

4 disordered regions span residues 1 to 53 (MTST…KPNA), 189 to 226 (VESQ…NQGS), 322 to 356 (NSKQ…RCSK), and 422 to 442 (VSME…RKSN). 2 stretches are compositionally biased toward polar residues: residues 12 to 22 (GSLNPPHSNPS) and 190 to 201 (ESQSAVSSNTVC). Positions 211 to 220 (KRMPQRRRSS) are enriched in basic residues. Composition is skewed to polar residues over residues 322-341 (NSKQ…NTVD) and 422-431 (VSMEQRTNQE).

This sequence belongs to the shugoshin family. Highly expressed in tissues containing meiocytes. Expressed at much lower level in leaves and pollen-containing flowers.

The protein resides in the nucleus. The protein localises to the chromosome. Its subcellular location is the centromere. In terms of biological role, plays a central role in chromosome cohesion during meiosis I by preventing premature dissociation of cohesin complex from centromeres after prophase, when most of cohesin complex dissociates from chromosomes arms. Required for maintenance of centromeric cohesion before prophase II and correct segregation of chromatids during meiosis II. Has apparently no function in mitosis. The sequence is that of Shugoshin-1 from Zea mays (Maize).